Here is a 312-residue protein sequence, read N- to C-terminus: GATA zinc finger domain-containing protein 20 (312 aa).

2 disordered regions span residues 1–45 (MGKR…PQQP) and 213–232 (TIGS…TNTN). Over residues 29 to 45 (QQQQQQQEQQPQQPQQP) the composition is skewed to low complexity. Residues 260–287 (CYVCGVTETPYWRRGTDEGVMVDLCNAC) form a GATA-type zinc finger.

This Dictyostelium discoideum (Social amoeba) protein is GATA zinc finger domain-containing protein 20 (gtaT).